The chain runs to 143 residues: Holo-[acyl-carrier-protein] synthase (143 aa).

The Mg(2+) site is built by Asp9 and Glu63.

Belongs to the P-Pant transferase superfamily. AcpS family. It depends on Mg(2+) as a cofactor.

It is found in the cytoplasm. It catalyses the reaction apo-[ACP] + CoA = holo-[ACP] + adenosine 3',5'-bisphosphate + H(+). Its function is as follows. Transfers the 4'-phosphopantetheine moiety from coenzyme A to a Ser of acyl-carrier-protein. This Burkholderia pseudomallei (strain 668) protein is Holo-[acyl-carrier-protein] synthase.